Here is a 470-residue protein sequence, read N- to C-terminus: V-type ATP synthase beta chain (470 aa).

Belongs to the ATPase alpha/beta chains family.

In terms of biological role, produces ATP from ADP in the presence of a proton gradient across the membrane. The V-type beta chain is a regulatory subunit. The chain is V-type ATP synthase beta chain from Deinococcus geothermalis (strain DSM 11300 / CIP 105573 / AG-3a).